We begin with the raw amino-acid sequence, 112 residues long: Large ribosomal subunit protein P2-B (112 aa).

Residues 89-112 (APAAADAKKEEEEEDDDMGFGLFD) are disordered.

Belongs to the eukaryotic ribosomal protein P1/P2 family. As to quaternary structure, P1 and P2 exist as dimers at the large ribosomal subunit. Phosphorylated.

In terms of biological role, plays an important role in the elongation step of protein synthesis. This chain is Large ribosomal subunit protein P2-B, found in Trypanosoma cruzi.